A 95-amino-acid chain; its full sequence is Putative defensin-like protein 262 (95 aa).

The first 26 residues, 1 to 26, serve as a signal peptide directing secretion; that stretch reads MEKTSLKLIFLFSLTVIAFCSSLGDA. Cystine bridges form between cysteine 48–cysteine 95, cysteine 64–cysteine 83, cysteine 70–cysteine 91, and cysteine 74–cysteine 93.

This sequence belongs to the DEFL family.

Its subcellular location is the secreted. This is Putative defensin-like protein 262 from Arabidopsis thaliana (Mouse-ear cress).